The sequence spans 173 residues: uncharacterized protein (173 aa).

An N-terminal signal peptide occupies residues 1 to 25; it reads MPVVTAVGRRRGFAMPWVSTARSGA.

This is an uncharacterized protein from Mycobacterium bovis (strain ATCC BAA-935 / AF2122/97).